The primary structure comprises 258 residues: Malonyl-[acyl-carrier protein] O-methyltransferase (258 aa).

The protein belongs to the methyltransferase superfamily.

It catalyses the reaction malonyl-[ACP] + S-adenosyl-L-methionine = malonyl-[ACP] methyl ester + S-adenosyl-L-homocysteine. It functions in the pathway cofactor biosynthesis; biotin biosynthesis. Functionally, converts the free carboxyl group of a malonyl-thioester to its methyl ester by transfer of a methyl group from S-adenosyl-L-methionine (SAM). It allows to synthesize pimeloyl-ACP via the fatty acid synthetic pathway. This Hamiltonella defensa subsp. Acyrthosiphon pisum (strain 5AT) protein is Malonyl-[acyl-carrier protein] O-methyltransferase.